The primary structure comprises 471 residues: Tryptophanase (471 aa).

3 positions are modified to N6-acetyllysine: K5, K115, and K156. The residue at position 270 (K270) is an N6-(pyridoxal phosphate)lysine. An N6-acetyllysine modification is found at K450.

The protein belongs to the beta-eliminating lyase family. Homotetramer. It depends on pyridoxal 5'-phosphate as a cofactor.

It catalyses the reaction L-tryptophan + H2O = indole + pyruvate + NH4(+). The protein operates within amino-acid degradation; L-tryptophan degradation via pyruvate pathway; indole and pyruvate from L-tryptophan: step 1/1. The chain is Tryptophanase from Escherichia coli O9:H4 (strain HS).